Consider the following 196-residue polypeptide: Probable GTP-binding protein EngB (196 aa).

Residues 22–195 (KLPEVALAGR…WNWIESITKV (174 aa)) form the EngB-type G domain. GTP is bound by residues 30–37 (GRSNVGKS), 57–61 (GKTQT), 75–78 (DVPG), 142–145 (TKID), and 174–176 (FSA). Mg(2+)-binding residues include S37 and T59.

It belongs to the TRAFAC class TrmE-Era-EngA-EngB-Septin-like GTPase superfamily. EngB GTPase family. It depends on Mg(2+) as a cofactor.

Its function is as follows. Necessary for normal cell division and for the maintenance of normal septation. This is Probable GTP-binding protein EngB from Ligilactobacillus salivarius (strain UCC118) (Lactobacillus salivarius).